Here is a 245-residue protein sequence, read N- to C-terminus: Farnesol dehydrogenase (245 aa).

NAD(+) contacts are provided by residues 11 to 40 (VTGA…ARRV) and Asp-64. Residue Ser-145 participates in substrate binding. The Proton acceptor role is filled by Tyr-160. Lys-164 contacts NAD(+).

This sequence belongs to the short-chain dehydrogenases/reductases (SDR) family. In terms of assembly, homodimer. As to expression, highly expressed level in the midgut and brain in adult females, and at lower level in the abdominal and thoracic ganglia. High levels are detected in corpora allata (CA), Malpighian tubules and fat body.

The catalysed reaction is (2E,6E)-farnesol + NADP(+) = (2E,6E)-farnesal + NADPH + H(+). Functionally, mediates oxidation of farnesol into farnesal, a precursor of juvenile hormone in the corpora allata (CA), the glands that synthesize juvenile hormone. Able to oxidize C(10) to C(15) isoprenoid and aliphatic alcohols. In Aedes aegypti (Yellowfever mosquito), this protein is Farnesol dehydrogenase.